We begin with the raw amino-acid sequence, 482 residues long: tRNA sulfurtransferase (482 aa).

Residues 61–165 (QQVLEILTTT…DDKLNQILAH (105 aa)) enclose the THUMP domain. Residues 183–184 (LI), Lys265, Gly287, and Gln296 each bind ATP. Residues Cys344 and Cys456 are joined by a disulfide bond. In terms of domain architecture, Rhodanese spans 404–482 (IEEHAVVLDI…GFNNVKVYRP (79 aa)). The active-site Cysteine persulfide intermediate is the Cys456.

Belongs to the ThiI family.

The protein resides in the cytoplasm. The enzyme catalyses [ThiI sulfur-carrier protein]-S-sulfanyl-L-cysteine + a uridine in tRNA + 2 reduced [2Fe-2S]-[ferredoxin] + ATP + H(+) = [ThiI sulfur-carrier protein]-L-cysteine + a 4-thiouridine in tRNA + 2 oxidized [2Fe-2S]-[ferredoxin] + AMP + diphosphate. It carries out the reaction [ThiS sulfur-carrier protein]-C-terminal Gly-Gly-AMP + S-sulfanyl-L-cysteinyl-[cysteine desulfurase] + AH2 = [ThiS sulfur-carrier protein]-C-terminal-Gly-aminoethanethioate + L-cysteinyl-[cysteine desulfurase] + A + AMP + 2 H(+). The protein operates within cofactor biosynthesis; thiamine diphosphate biosynthesis. Functionally, catalyzes the ATP-dependent transfer of a sulfur to tRNA to produce 4-thiouridine in position 8 of tRNAs, which functions as a near-UV photosensor. Also catalyzes the transfer of sulfur to the sulfur carrier protein ThiS, forming ThiS-thiocarboxylate. This is a step in the synthesis of thiazole, in the thiamine biosynthesis pathway. The sulfur is donated as persulfide by IscS. The polypeptide is tRNA sulfurtransferase (Vibrio vulnificus (strain YJ016)).